The chain runs to 127 residues: MQQRGLAIVALAVCAALHASEAILPIASSCCTEVSHHISRRLLERVNMCRIQRADGDCDLAAVILHVKRRRICVSPHNHTVKQWMKVQAAKKNGKGNVCHRKKHHGKRNSNRAHQGKHETYGHKTPY.

Positions 1-19 (MQQRGLAIVALAVCAALHA) are cleaved as a signal peptide. 2 disulfides stabilise this stretch: cysteine 30-cysteine 58 and cysteine 31-cysteine 73. An N-linked (GlcNAc...) asparagine glycan is attached at asparagine 78. Residues 92–115 (KNGKGNVCHRKKHHGKRNSNRAHQ) are compositionally biased toward basic residues. The interval 92–127 (KNGKGNVCHRKKHHGKRNSNRAHQGKHETYGHKTPY) is disordered. The segment covering 116-127 (GKHETYGHKTPY) has biased composition (basic and acidic residues).

It belongs to the intercrine beta (chemokine CC) family. Preferentially expressed by epithelial cells of diverse tissues including normal and pathological colon, salivary gland, mammary gland, trachea and rectum. Also found in prostate, spleen, thyroid, psoriasis skin and in lower levels in peripheral blood leukocytes, small intestine, Peyer patches, stomach and normal skin.

Its subcellular location is the secreted. In terms of biological role, chemotactic activity for resting CD4, CD8 T-cells and eosinophils. Binds to CCR3 and CCR10 and induces calcium mobilization in a dose-dependent manner. This is C-C motif chemokine 28 (CCL28) from Homo sapiens (Human).